The primary structure comprises 65 residues: Large ribosomal subunit protein bL33c (65 aa).

The protein belongs to the bacterial ribosomal protein bL33 family.

Its subcellular location is the plastid. The protein localises to the chloroplast. This chain is Large ribosomal subunit protein bL33c, found in Chara vulgaris (Common stonewort).